The following is a 496-amino-acid chain: Probable cytosol aminopeptidase (496 aa).

Mn(2+) contacts are provided by K258 and D263. K270 is an active-site residue. Positions 281, 340, and 342 each coordinate Mn(2+). Residue R344 is part of the active site.

It belongs to the peptidase M17 family. It depends on Mn(2+) as a cofactor.

Its subcellular location is the cytoplasm. The enzyme catalyses Release of an N-terminal amino acid, Xaa-|-Yaa-, in which Xaa is preferably Leu, but may be other amino acids including Pro although not Arg or Lys, and Yaa may be Pro. Amino acid amides and methyl esters are also readily hydrolyzed, but rates on arylamides are exceedingly low.. It carries out the reaction Release of an N-terminal amino acid, preferentially leucine, but not glutamic or aspartic acids.. Functionally, presumably involved in the processing and regular turnover of intracellular proteins. Catalyzes the removal of unsubstituted N-terminal amino acids from various peptides. The chain is Probable cytosol aminopeptidase from Helicobacter pylori (strain P12).